The primary structure comprises 228 residues: Ribonuclease 3 (228 aa).

An RNase III domain is found at 3-132; that stretch reads IRPLEEHLGI…FLGALYLDQG (130 aa). Glu-45 is a Mg(2+) binding site. Residue Asp-49 is part of the active site. Mg(2+) contacts are provided by Asp-118 and Glu-121. Residue Glu-121 is part of the active site. The DRBM domain occupies 158–227; that stretch reads DYKSQLQEFV…AKNALDSINN (70 aa). Positions 205 to 228 are disordered; sequence GTGRTKKEAEQRAAKNALDSINNS.

This sequence belongs to the ribonuclease III family. Homodimer. Requires Mg(2+) as cofactor.

Its subcellular location is the cytoplasm. The enzyme catalyses Endonucleolytic cleavage to 5'-phosphomonoester.. Functionally, digests double-stranded RNA. Involved in the processing of primary rRNA transcript to yield the immediate precursors to the large and small rRNAs (23S and 16S). Processes some mRNAs, and tRNAs when they are encoded in the rRNA operon. Processes pre-crRNA and tracrRNA of type II CRISPR loci if present in the organism. In Oceanobacillus iheyensis (strain DSM 14371 / CIP 107618 / JCM 11309 / KCTC 3954 / HTE831), this protein is Ribonuclease 3.